Reading from the N-terminus, the 652-residue chain is Protein high chlorophyll fluorescent 107 (652 aa).

2 disordered regions span residues 1 to 21 (MHFF…NTSS) and 78 to 121 (VFSP…EGKK). The transit peptide at 1 to 68 (MHFFFVPNSS…TFSSKNTYLY (68 aa)) directs the protein to the chloroplast. The segment covering 105–121 (PLLENSDKESSEEEGKK) has biased composition (basic and acidic residues). TPR repeat units lie at residues 168 to 201 (LDLS…WPED), 202 to 235 (GRPY…TQGE), 237 to 270 (SYIW…DKKH), 271 to 304 (VAAW…CGRN), 305 to 338 (EYIY…NSRS), 339 to 372 (CASW…SPKN), 374 to 406 (FAWH…NPRD), 407 to 440 (PVLL…DPRH), 441 to 474 (QPVW…DANT), 478 to 511 (SRCL…NSQS), 543 to 576 (TEVV…GQNN), and 598 to 631 (QQPE…DPLK). Positions 585–610 (LRNMNRTKDSQSNQQPESSAGREDIE) are disordered.

May form homomultimers. Part of a multi-subunit complex in the range of 60-190 and 600-800 kDa in chloroplast membranes.

Its subcellular location is the plastid. It localises to the chloroplast. The protein localises to the chloroplast membrane. The protein resides in the chloroplast stroma. In terms of biological role, involved, directly or indirectly, in the processing of chloroplast encoded mRNAs. Exhibits sequence-specific RNA binding and RNA remodeling activities, probably leading to the activation of translation of the target gene cluster psbB-psbT-psbH-petB-petD. Blocks 5'-3' and 3'-5' exoribonucleases (e.g. polynucleotide phosphorylase (PNPase), RNase R) in vitro. Necessary for intercistronic RNA processing of the psbH 5' untranslated region or the stabilization of 5' processed psbH RNAs. Also required for the synthesis of psbB. The polypeptide is Protein high chlorophyll fluorescent 107 (Arabidopsis thaliana (Mouse-ear cress)).